We begin with the raw amino-acid sequence, 145 residues long: Large ribosomal subunit protein uL13 (145 aa).

This sequence belongs to the universal ribosomal protein uL13 family. In terms of assembly, part of the 50S ribosomal subunit.

This protein is one of the early assembly proteins of the 50S ribosomal subunit, although it is not seen to bind rRNA by itself. It is important during the early stages of 50S assembly. This chain is Large ribosomal subunit protein uL13, found in Brevibacillus brevis (strain 47 / JCM 6285 / NBRC 100599).